Reading from the N-terminus, the 913-residue chain is Pentatricopeptide repeat-containing protein At1g10270 (913 aa).

Residues 34 to 138 (SLSPANEDPE…PNAPRLPDST (105 aa)) are disordered. Over residues 64-73 (DPSQFQIPQN) the composition is skewed to polar residues. Pro residues predominate over residues 74 to 84 (HTPPIPYPPIP). The short motif at 99–108 (ERRRRKRRLR) is the Nuclear localization signal element. Basic and acidic residues predominate over residues 108 to 130 (RIEPPLHALRRDPSAPPPKRDPN). A leucine-zipper region spans residues 134–167 (LPDSTSALVGQRLNLHNRVQSLIRASDLDAASKL). 11 PPR repeats span residues 179–214 (TVFTCNAIIAAMYRAKRYSESISLFQYFFKQSNIVP), 215–250 (NVVSYNQIINAHCDEGNVDEALEVYRHILANAPFAP), 251–285 (SSVTYRHLTKGLVQAGRIGDAASLLREMLSKGQAA), 286–316 (DSTVYNNLIRGYLDLGDFDKAVEFFDELKSK), 321–355 (DGIVNATFMEYWFEKGNDKEAMESYRSLLDKKFRM), 356–390 (HPPTGNVLLEVFLKFGKKDEAWALFNEMLDNHAPP), 396–426 (NSDTVGIMVNECFKMGEFSEAINTFKKVGSK), 435–469 (DYLGYCNIVTRFCEQGMLTEAERFFAEGVSRSLPA), 470–504 (DAPSHRAMIDAYLKAERIDDAVKMLDRMVDVNLRV), 505–539 (VADFGARVFGELIKNGKLTESAEVLTKMGEREPKP), and 540–574 (DPSIYDVVVRGLCDGDALDQAKDIVGEMIRHNVGV). The segment at 607–913 (RNAGQSGNTP…QEKKVVELRN (307 aa)) is disordered. Polar residues predominate over residues 639–649 (WTSQGVVHSNS). Low complexity-rich tracts occupy residues 650-666 (GWANGTAGQTAGGAYKA) and 673-690 (SWSNTSDNQQQQSWSNQT). Residues 674 to 858 (WSNTSDNQQQ…TAQQQWSNQT (185 aa)) are 14 X 11 AA approximate tandem repeats of W-x(2)-Q-x(4)-Q-x(2). Residues 691–700 (AGQQPPSWSR) show a composition bias toward polar residues. The segment covering 706–727 (QQQQSWSQQSGWSSPSGHQQSW) has biased composition (low complexity). Residues 728-761 (TNQTAGQQQPWANQTPGQQQQWANQTPGQQQQLA) show a composition bias toward polar residues. Low complexity predominate over residues 762–791 (NQTPGQQQQWANQTPGQQQQWANQNNGHQQ). The segment covering 792–814 (PWANQNTGHQQSWANQTPSQQQP) has biased composition (polar residues). Over residues 815–845 (WANQTTGQQQGWGNQTTGQQQQWANQTAGQQ) the composition is skewed to low complexity. Polar residues-rich tracts occupy residues 846-867 (SGWTAQQQWSNQTASHQQSQWL) and 875-894 (ANQTPWSNSVDSHLPQQQEP). Positions 899-913 (ECQETQEKKVVELRN) are enriched in basic and acidic residues.

It belongs to the PPR family. P subfamily. Interacts with RPB36B through its WQQ domain. Ubiquitous but preferentially expressed in gametophytes and young embryos.

The protein localises to the nucleus. Its function is as follows. May function as a transcriptional regulator essential for early embryogenesis. In Arabidopsis thaliana (Mouse-ear cress), this protein is Pentatricopeptide repeat-containing protein At1g10270 (GRP23).